We begin with the raw amino-acid sequence, 223 residues long: Ribonuclease T (223 aa).

Residues 1-11 are compositionally biased toward acidic residues; that stretch reads MSDDHFDDEQE. The disordered stretch occupies residues 1-21; it reads MSDDHFDDEQEGSSGGPRHPM. The Exonuclease domain maps to 31–205; it reads VVVDVETGGF…YDTEKTAELF (175 aa). Mg(2+) contacts are provided by Asp-34, Glu-36, His-192, and Asp-197. His-192 functions as the Proton donor/acceptor in the catalytic mechanism.

The protein belongs to the RNase T family. Homodimer. Mg(2+) serves as cofactor.

In terms of biological role, trims short 3' overhangs of a variety of RNA species, leaving a one or two nucleotide 3' overhang. Responsible for the end-turnover of tRNA: specifically removes the terminal AMP residue from uncharged tRNA (tRNA-C-C-A). Also appears to be involved in tRNA biosynthesis. The protein is Ribonuclease T of Pseudomonas fluorescens (strain ATCC BAA-477 / NRRL B-23932 / Pf-5).